The sequence spans 606 residues: Leucine-rich repeat and immunoglobulin-like domain-containing nogo receptor-interacting protein 1 (606 aa).

Residues 1–27 (MILQLPSCLCPILLIVVGSILSGSASG) form the signal peptide. Cystine bridges form between Cys-28–Cys-34 and Cys-32–Cys-43. One can recognise an LRRNT domain in the interval 28 to 57 (CPQRCDCSPQDRSVLCHRKRYLDVPEGIPT). At 28-547 (CPQRCDCSPQ…FDIKTLIIAT (520 aa)) the chain is on the extracellular side. LRR repeat units follow at residues 58–79 (DTRL…EFSA), 82–103 (YLEE…AFNG), 106–127 (NLRS…VFTG), 130–151 (NLTQ…MFQD), 154–175 (NLKS…AFRG), 178–199 (SLEE…ALSH), 202–223 (GLIT…SFKR), 250–271 (NLTS…AIRH), 274–295 (YLRF…MLYE), 298–319 (RLQE…AFRG), and 322–343 (HLKV…SFHS). N-linked (GlcNAc...) asparagine glycosylation is present at Asn-130. A glycan (N-linked (GlcNAc...) asparagine) is linked at Asn-188. N-linked (GlcNAc...) asparagine glycosylation is found at Asn-250, Asn-260, and Asn-279. Asn-327, Asn-374, Asn-478, Asn-491, Asn-512, Asn-523, and Asn-528 each carry an N-linked (GlcNAc...) asparagine glycan. Residues 355 to 409 (NPLACDCRLLWIFRRRWRLNFSRQQPSCSSPEYVQGKEFKDFPDVLQPNYFTCRR) enclose the LRRCT domain. 3 disulfides stabilise this stretch: Cys-359–Cys-382, Cys-361–Cys-407, and Cys-432–Cys-483. The Ig-like C2-type domain occupies 397 to 496 (PDVLQPNYFT…NAGGNDTSLA (100 aa)). Residues 548–568 (TMGFISFLGVVLFCLVLLFLW) traverse the membrane as a helical segment. At 569–606 (SRGKGNTKHNIEIEYVPRKSDAGLSSADAPRKFNMKMI) the chain is on the cytoplasmic side.

The protein resides in the cell membrane. Functionally, may play a role in regulating axonal regeneration and plasticity in the adult central nervous system. The sequence is that of Leucine-rich repeat and immunoglobulin-like domain-containing nogo receptor-interacting protein 1 (lingo1) from Xenopus tropicalis (Western clawed frog).